Here is a 353-residue protein sequence, read N- to C-terminus: Thrombopoietin (353 aa).

The N-terminal stretch at Met1–Ser21 is a signal peptide. Ser22 carries an O-linked (GalNAc...) serine glycan. 2 cysteine pairs are disulfide-bonded: Cys28–Cys172 and Cys50–Cys106. O-linked (GalNAc...) threonine glycans are attached at residues Thr58, Thr131, Thr179, and Thr180. Residue Ser184 is glycosylated (O-linked (GalNAc...) serine). N-linked (GlcNAc...) (complex) asparagine glycans are attached at residues Asn197 and Asn206. A glycan (O-linked (GalNAc...) threonine) is linked at Thr213. Residues Asn234 and Asn255 are each glycosylated (N-linked (GlcNAc...) (complex) asparagine). The tract at residues Thr257–Gly353 is disordered. An O-linked (GalNAc...) serine glycan is attached at Ser265. Positions Ser275–Tyr304 are enriched in polar residues. A compositionally biased stretch (pro residues) spans Leu324–Thr335. Asn340 and Asn348 each carry an N-linked (GlcNAc...) asparagine glycan. Residues Tyr343–Gly353 show a composition bias toward polar residues.

Belongs to the EPO/TPO family. As to quaternary structure, interacts with MPL/TPOR.

The protein localises to the secreted. Lineage-specific cytokine affecting the proliferation and maturation of megakaryocytes from their committed progenitor cells. It acts at a late stage of megakaryocyte development. It may be the major physiological regulator of circulating platelets. This is Thrombopoietin (THPO) from Homo sapiens (Human).